Here is a 297-residue protein sequence, read N- to C-terminus: Tyrosine recombinase XerD (297 aa).

Residues 1–86 (MNDLIEDFLH…SLRSFFHYLM (86 aa)) enclose the Core-binding (CB) domain. In terms of domain architecture, Tyr recombinase spans 107–291 (GLPKVLNLDD…TKLRLKDVYK (185 aa)). Residues R147, K171, H243, R246, and H269 contribute to the active site. The active-site O-(3'-phospho-DNA)-tyrosine intermediate is Y278.

Belongs to the 'phage' integrase family. XerD subfamily. Forms a cyclic heterotetrameric complex composed of two molecules of XerC and two molecules of XerD.

The protein resides in the cytoplasm. Functionally, site-specific tyrosine recombinase, which acts by catalyzing the cutting and rejoining of the recombining DNA molecules. The XerC-XerD complex is essential to convert dimers of the bacterial chromosome into monomers to permit their segregation at cell division. It also contributes to the segregational stability of plasmids. The sequence is that of Tyrosine recombinase XerD from Listeria monocytogenes serovar 1/2a (strain ATCC BAA-679 / EGD-e).